The following is a 527-amino-acid chain: Rhamnogalacturonate lyase A (527 aa).

The signal sequence occupies residues 1–20; the sequence is MLSKTFLLSSAVLWARVANA. Residues Asn27 and Asn46 are each glycosylated (N-linked (GlcNAc...) asparagine). 2 cysteine pairs are disulfide-bonded: Cys50–Cys93 and Cys184–Cys193. Asn351 is a glycosylation site (N-linked (GlcNAc...) asparagine).

Belongs to the polysaccharide lyase 4 family.

The protein resides in the secreted. It carries out the reaction Endotype eliminative cleavage of L-alpha-rhamnopyranosyl-(1-&gt;4)-alpha-D-galactopyranosyluronic acid bonds of rhamnogalacturonan I domains in ramified hairy regions of pectin leaving L-rhamnopyranose at the reducing end and 4-deoxy-4,5-unsaturated D-galactopyranosyluronic acid at the non-reducing end.. Pectinolytic enzymes consist of four classes of enzymes: pectin lyase, polygalacturonase, pectin methylesterase and rhamnogalacturonase. Degrades the rhamnogalacturonan I (RG-I) backbone of pectin. Active against linseed rhamnogalacturonan. The chain is Rhamnogalacturonate lyase A (rglA) from Emericella nidulans (strain FGSC A4 / ATCC 38163 / CBS 112.46 / NRRL 194 / M139) (Aspergillus nidulans).